The primary structure comprises 122 residues: Phycocyanin PC645 alpha-2 subunit (122 aa).

(2R,3E)-phycocyanobilin contacts are provided by Asp54 and Arg68. Mesobiliverdin contacts are provided by Cys70, Lys76, Glu77, and Cys92.

The protein belongs to the phycoerythrin family. In terms of assembly, heterotetramer of 2 different alpha chains and 2 identical beta chains which form 2 alpha-beta heterodimers within the heterotetramer. Post-translationally, contains two phycocyanobilin chromophores and one mesobiliverdin chromophore with binding mediated by both the alpha and beta subunits.

It is found in the plastid. It localises to the chloroplast thylakoid membrane. Functionally, light-harvesting photosynthetic tetrapyrrole chromophore-protein from the phycobiliprotein complex. This chain is Phycocyanin PC645 alpha-2 subunit, found in Chroomonas sp. (strain CCMP270).